Reading from the N-terminus, the 445-residue chain is 8-amino-7-oxononanoate synthase (445 aa).

Residue Arg40 coordinates substrate. 131–132 is a pyridoxal 5'-phosphate binding site; it reads GY. Substrate is bound at residue His156. Pyridoxal 5'-phosphate is bound by residues Ser202, His230, and Thr258. Lys261 carries the post-translational modification N6-(pyridoxal phosphate)lysine. Thr377 contacts substrate. Residues 408–445 form a disordered region; that stretch reads ASEGQTRRDAEQPPRSLRSLPPEGAAASLGAARRETAA.

This sequence belongs to the class-II pyridoxal-phosphate-dependent aminotransferase family. BioF subfamily. In terms of assembly, homodimer. It depends on pyridoxal 5'-phosphate as a cofactor.

The catalysed reaction is 6-carboxyhexanoyl-[ACP] + L-alanine + H(+) = (8S)-8-amino-7-oxononanoate + holo-[ACP] + CO2. Its pathway is cofactor biosynthesis; biotin biosynthesis. In terms of biological role, catalyzes the decarboxylative condensation of pimeloyl-[acyl-carrier protein] and L-alanine to produce 8-amino-7-oxononanoate (AON), [acyl-carrier protein], and carbon dioxide. This Burkholderia ambifaria (strain MC40-6) protein is 8-amino-7-oxononanoate synthase.